A 297-amino-acid chain; its full sequence is MKTLVVALGGNALLQRGEALTAENQYRNIASAVPALARLARSYRLAIVHGNGPQVGLLALQNLAWKEVEPYPLDVLVAESQGMIGYMLAQSLSAQPQMPPVTTVLTRIEVSPDDPAFLQPEKFIGPVYQPEEQEALEAAYGWQMKRDGKYLRRVVASPQPRKILDSEAIELLLKEGHVVICSGGGGVPVTDDGAGSEAVIDKDLAAALLAEQINADGLVILTDADAVYENWGTPQQRAIRHATPDELAPFAKADGSMGPNVTAVSGYVRSRGKPAWIGALSRIEETLAGEAGTCISL.

It belongs to the carbamate kinase family.

It is found in the cytoplasm. The enzyme catalyses hydrogencarbonate + NH4(+) + ATP = carbamoyl phosphate + ADP + H2O + H(+). It catalyses the reaction carbamate + ATP = carbamoyl phosphate + ADP. It carries out the reaction hydrogencarbonate + NH4(+) = carbamate + H2O + H(+). Its pathway is nitrogen metabolism; (S)-allantoin degradation. Functionally, kinase involved in the anaerobic nitrogen utilization via the assimilation of allantoin. Catalyzes the transfer of a phosphate group from carbamoyl phosphate to ADP to produce ATP and leave carbamate, which spontaneously hydrolyzes to ammonia and hydrogencarbonate. The protein is Carbamate kinase of Escherichia coli (strain K12).